The primary structure comprises 466 residues: Vimentin (466 aa).

Composition is skewed to low complexity over residues 1–13 and 20–33; these read MSTR…SYRR and TSSR…YVTT. Residues 1–33 are disordered; that stretch reads MSTRSVSSSSYRRMFGGSGTSSRPSSNRSYVTT. Ser-2 carries the post-translational modification N-acetylserine. A head region spans residues 2-95; that stretch reads STRSVSSSSY…FSLADAINTE (94 aa). Residue Ser-5 is modified to Phosphoserine. Position 7 is a phosphoserine; by PKA and PKC; alternate (Ser-7). Residue Ser-7 is glycosylated (O-linked (GlcNAc) serine; alternate). Ser-8 carries the post-translational modification Phosphoserine. Residues Ser-9 and Ser-10 each carry the phosphoserine; by PKC modification. The residue at position 20 (Thr-20) is a Phosphothreonine. Position 21 is a phosphoserine; by PKC (Ser-21). Ser-25 is modified (phosphoserine; by PKA and PKC). Ser-26 carries the phosphoserine; by PKC modification. A glycan (O-linked (GlcNAc) threonine) is linked at Thr-33. O-linked (GlcNAc) serine; alternate glycosylation occurs at Ser-34. Ser-34 is modified (phosphoserine; by PKC; alternate). A Phosphoserine; by CaMK2, PKA, PKC and ROCK2 modification is found at Ser-39. Ser-42 is modified (phosphoserine; by PKC). Ser-47 is subject to Phosphoserine; by PKA. Residue Ser-49 is modified to Phosphoserine. Ser-51 is subject to Phosphoserine; by PKA and PKC. The residue at position 53 (Tyr-53) is a Phosphotyrosine. Ser-55 and Ser-56 each carry phosphoserine. Tyr-61 is modified (phosphotyrosine). Ser-66 is modified (phosphoserine; by PKA and PKC). Ser-72 is modified (phosphoserine; by AURKB and ROCK2). Residue Ser-73 is modified to Phosphoserine. Ser-83 bears the Phosphoserine; by CaMK2 mark. The residue at position 87 (Ser-87) is a Phosphoserine. A coil 1A region spans residues 96–131; that stretch reads FKNTRTNEKVELQELNDRFANYIDKVRFLEQQNKIL. Positions 96–131 form a coiled coil; that stretch reads FKNTRTNEKVELQELNDRFANYIDKVRFLEQQNKIL. Residues 103-411 enclose the IF rod domain; that stretch reads EKVELQELND…KLLEGEESRI (309 aa). Lys-104 participates in a covalent cross-link: Glycyl lysine isopeptide (Lys-Gly) (interchain with G-Cter in SUMO2). At Tyr-117 the chain carries Phosphotyrosine. N6-acetyllysine; alternate is present on residues Lys-120, Lys-129, and Lys-139. An N6-succinyllysine; alternate mark is found at Lys-120 and Lys-129. Glycyl lysine isopeptide (Lys-Gly) (interchain with G-Cter in SUMO2); alternate cross-links involve residues Lys-120, Lys-129, and Lys-139. Residues 132-153 are linker 1; the sequence is LAELEQLKGQGKSRLGDLYEEE. Phosphoserine is present on Ser-144. Residues 154-245 are a coiled coil; the sequence is MRELRRQVDQ…KLHDEEIQEL (92 aa). The interval 154-245 is coil 1B; that stretch reads MRELRRQVDQ…KLHDEEIQEL (92 aa). Lys-168 is subject to N6-acetyllysine. Lys-188 is subject to N6-acetyllysine; alternate. Lys-188 carries the N6-succinyllysine; alternate modification. Ser-214 bears the Phosphoserine mark. The residue at position 223 (Lys-223) is an N6-acetyllysine; alternate. Lys-223 is covalently cross-linked (Glycyl lysine isopeptide (Lys-Gly) (interchain with G-Cter in SUMO2); alternate). Phosphoserine is present on Ser-226. Position 235 is an N6-acetyllysine (Lys-235). Residues 246 to 268 form a linker 12 region; it reads QAQIQEQHVQIDVDVSKPDLTAA. A Glycyl lysine isopeptide (Lys-Gly) (interchain with G-Cter in SUMO2) cross-link involves residue Lys-262. Positions 269 to 407 are coil 2; the sequence is LRDVRQQYES…ATYRKLLEGE (139 aa). Lys-294 is modified (N6-acetyllysine; alternate). Lys-294 carries the N6-succinyllysine; alternate modification. Lys-294 participates in a covalent cross-link: Glycyl lysine isopeptide (Lys-Gly) (interchain with G-Cter in SUMO2); alternate. The residue at position 299 (Ser-299) is a Phosphoserine. Residues 303 to 407 adopt a coiled-coil conformation; sequence NRNNDALRQA…ATYRKLLEGE (105 aa). Lys-313 is covalently cross-linked (Glycyl lysine isopeptide (Lys-Gly) (interchain with G-Cter in SUMO2)). The residue at position 325 (Ser-325) is a Phosphoserine. Positions 326 to 329 match the [IL]-x-C-x-x-[DE] motif motif; it reads LTCE. Residue Lys-373 is modified to N6-acetyllysine; alternate. Lys-373 is covalently cross-linked (Glycyl lysine isopeptide (Lys-Gly) (interchain with G-Cter in SUMO2); alternate). Residues 408–466 form a tail region; it reads ESRISLPLPTFSSLNLRETNLESLPLVDTHSKRTLLIKTVETRDGQVINETSQHHDDLE. Phosphoserine is present on residues Ser-409, Ser-412, Ser-419, and Ser-420. A Phosphothreonine modification is found at Thr-426. Ser-430 carries the phosphoserine modification. Position 436 is a phosphothreonine (Thr-436). A Phosphoserine modification is found at Ser-438. Lys-439 participates in a covalent cross-link: Glycyl lysine isopeptide (Lys-Gly) (interchain with G-Cter in SUMO2). Lys-445 is subject to N6-acetyllysine; alternate. An N6-succinyllysine; alternate modification is found at Lys-445. Lys-445 participates in a covalent cross-link: Glycyl lysine isopeptide (Lys-Gly) (interchain with G-Cter in SUMO2); alternate. Lys-445 is covalently cross-linked (Glycyl lysine isopeptide (Lys-Gly) (interchain with G-Cter in SUMO1); alternate). A phosphothreonine mark is found at Thr-446 and Thr-458. Ser-459 carries the phosphoserine modification.

The protein belongs to the intermediate filament family. In terms of assembly, homomer assembled from elementary dimers. Identified in complexes that contain VIM, EZR, AHNAK, BFSP1, BFSP2, ANK2, PLEC, PRX and spectrin. Interacts with BCAS3. Interacts with LGSN. Interacts with SYNM. Interacts (via rod region) with PLEC (via CH 1 domain). Interacts with PLEC isoform 1C. Interacts with STK33. Interacts with LARP6. Interacts with RAB8B. Interacts with TOR1A; the interaction associates TOR1A with the cytoskeleton. Interacts with TOR1AIP1. Interacts with DIAPH1. Interacts with EPPK1; interaction is dependent of higher-order structure of intermediate filament. Interacts with the non-receptor tyrosine kinase SRMS; the interaction leads to phosphorylation of VIM. Interacts with NOD2. Interacts (via head region) with CORO1C. Interacts with HDGF. Interacts with PRKCE (via phorbol-ester/DAG-type 2 domain). Interacts with BFSP2. Interacts with PPL. Interacts with PKP1 and PKP2. Interacts with SCRIB (via PDZ domains); the interaction protects SCRIB from proteasomal degradation and facilitates SCRIB localization to intermediate filaments, the interaction is reduced by cell contact inhibition. Post-translationally, phosphorylation by PKN1 inhibits the formation of filaments. Filament disassembly during mitosis is promoted by phosphorylation at Ser-55 as well as by nestin. One of the most prominent phosphoproteins in various cells of mesenchymal origin. Phosphorylation is enhanced during cell division, at which time vimentin filaments are significantly reorganized. Phosphorylated at Ser-56 by CDK5 during neutrophil secretion in the cytoplasm. Phosphorylated by STK33. Phosphorylated on tyrosine residues by SRMS. In terms of processing, S-nitrosylation is induced by interferon-gamma and oxidatively-modified low-densitity lipoprotein (LDL(ox)) possibly implicating the iNOS-S100A8/9 transnitrosylase complex. Detected in eye lens fiber cells (at protein level). Expressed in retinal lens epithelial cells (at protein level). Expressed in Langerhans cells in the epidermis (at protein level).

It localises to the cytoplasm. Its subcellular location is the cytoskeleton. It is found in the nucleus matrix. The protein resides in the cell membrane. Functionally, vimentins are class-III intermediate filaments found in various non-epithelial cells, especially mesenchymal cells. Vimentin is attached to the nucleus, endoplasmic reticulum, and mitochondria, either laterally or terminally. Plays a role in cell directional movement, orientation, cell sheet organization and Golgi complex polarization at the cell migration front. Protects SCRIB from proteasomal degradation and facilitates its localization to intermediate filaments in a cell contact-mediated manner. Its function is as follows. Involved with LARP6 in the stabilization of type I collagen mRNAs for CO1A1 and CO1A2. In Mus musculus (Mouse), this protein is Vimentin.